An 802-amino-acid chain; its full sequence is Oligophrenin-1 (802 aa).

The 104-residue stretch at 265–368 (QPTIEGYLYT…WMEAMDGKEP (104 aa)) folds into the PH domain. Residues 380 to 564 (MELNEVGFKF…ILIEHFGKIY (185 aa)) enclose the Rho-GAP domain. Disordered regions lie at residues 569-589 (EESA…HKPI), 607-770 (LDES…NAGE), and 783-802 (FETA…GDES). The span at 616–627 (HQTPNGTITSSI) shows a compositional bias: polar residues. The segment covering 716 to 732 (HHKEGDADSFSKVRPPG) has biased composition (basic and acidic residues).

In terms of assembly, interacts with HOMER1. Interacts with AMPA receptor complexes. Interacts with SH3GL2 (endophilin-A1). Interacts (via C-terminus) with NR1D1.

Its subcellular location is the postsynapse. The protein resides in the presynapse. The protein localises to the cell projection. It localises to the axon. It is found in the dendritic spine. Its subcellular location is the dendrite. The protein resides in the cytoplasm. Functionally, stimulates GTP hydrolysis of members of the Rho family. Its action on RHOA activity and signaling is implicated in growth and stabilization of dendritic spines, and therefore in synaptic function. Critical for the stabilization of AMPA receptors at postsynaptic sites. Critical for the regulation of synaptic vesicle endocytosis at pre-synaptic terminals. Required for the localization of NR1D1 to dendrites, can suppress its repressor activity and protect it from proteasomal degradation. This Pan troglodytes (Chimpanzee) protein is Oligophrenin-1 (OPHN1).